The following is a 348-amino-acid chain: Fe(3+) ions import ATP-binding protein FbpC (348 aa).

The region spanning 7-237 (VELRNVTKRF…PASRFMASFM (231 aa)) is the ABC transporter domain. Residue 39–46 (GPSGCGKT) coordinates ATP.

This sequence belongs to the ABC transporter superfamily. Fe(3+) ion importer (TC 3.A.1.10) family. As to quaternary structure, the complex is composed of two ATP-binding proteins (FbpC), two transmembrane proteins (FbpB) and a solute-binding protein (FbpA).

Its subcellular location is the cell inner membrane. It catalyses the reaction Fe(3+)(out) + ATP + H2O = Fe(3+)(in) + ADP + phosphate + H(+). Part of the ABC transporter complex FbpABC involved in Fe(3+) ions import. Responsible for energy coupling to the transport system. The protein is Fe(3+) ions import ATP-binding protein FbpC of Escherichia coli (strain K12).